The following is a 347-amino-acid chain: GMP reductase (347 aa).

108 to 131 provides a ligand contact to NADP(+); sequence ADFEKTKQILDLNPALNFVCIDVA. Residues G181 and G183 each coordinate K(+). C186 (thioimidate intermediate) is an active-site residue. Position 216-239 (216-239) interacts with NADP(+); sequence IVSDGGCTTPGDVAKAFGGGADFV.

This sequence belongs to the IMPDH/GMPR family. GuaC type 1 subfamily. In terms of assembly, homotetramer.

The enzyme catalyses IMP + NH4(+) + NADP(+) = GMP + NADPH + 2 H(+). Its function is as follows. Catalyzes the irreversible NADPH-dependent deamination of GMP to IMP. It functions in the conversion of nucleobase, nucleoside and nucleotide derivatives of G to A nucleotides, and in maintaining the intracellular balance of A and G nucleotides. The sequence is that of GMP reductase from Shigella dysenteriae serotype 1 (strain Sd197).